The primary structure comprises 358 residues: Peptide chain release factor 1 (358 aa).

At Q234 the chain carries N5-methylglutamine.

Belongs to the prokaryotic/mitochondrial release factor family. Post-translationally, methylated by PrmC. Methylation increases the termination efficiency of RF1.

The protein resides in the cytoplasm. In terms of biological role, peptide chain release factor 1 directs the termination of translation in response to the peptide chain termination codons UAG and UAA. The sequence is that of Peptide chain release factor 1 from Chloroherpeton thalassium (strain ATCC 35110 / GB-78).